A 199-amino-acid chain; its full sequence is Thymidine kinase (199 aa).

Residues 15-22 and 88-91 contribute to the ATP site; these read GSMFSGKS and DEVQ. Glu89 serves as the catalytic Proton acceptor. Zn(2+) contacts are provided by Cys145, Cys148, Cys183, and His186.

The protein belongs to the thymidine kinase family. As to quaternary structure, homotetramer.

The protein localises to the cytoplasm. It carries out the reaction thymidine + ATP = dTMP + ADP + H(+). This chain is Thymidine kinase, found in Staphylococcus aureus (strain Mu50 / ATCC 700699).